A 412-amino-acid chain; its full sequence is Putative competence-damage inducible protein (412 aa).

Belongs to the CinA family.

The chain is Putative competence-damage inducible protein from Clostridium perfringens (strain ATCC 13124 / DSM 756 / JCM 1290 / NCIMB 6125 / NCTC 8237 / Type A).